Here is a 380-residue protein sequence, read N- to C-terminus: Cytochrome b (380 aa).

4 helical membrane passes run 33–53, 77–98, 113–133, and 178–198; these read FGSLLGICLVLQILTGLFLAM, WFIRYLHANGASMFFICLYIHV, WNVGIILLFTVMATAFMGYVL, and FFAFHFILPFIIVALVMVHLL. Heme b-binding residues include His83 and His97. Heme b-binding residues include His182 and His196. Residue His201 participates in a ubiquinone binding. The next 4 helical transmembrane spans lie at 226–246, 288–308, 320–340, and 347–367; these read TKDILGVLLLILFLISLVLFA, LGGVLALITSILTLTLLPYLY, LTQLCYWMLVSDIMILTWIGA, and FITIGQVASILYFTIIIILMP.

This sequence belongs to the cytochrome b family. In terms of assembly, the cytochrome bc1 complex contains 11 subunits: 3 respiratory subunits (MT-CYB, CYC1 and UQCRFS1), 2 core proteins (UQCRC1 and UQCRC2) and 6 low-molecular weight proteins (UQCRH/QCR6, UQCRB/QCR7, UQCRQ/QCR8, UQCR10/QCR9, UQCR11/QCR10 and a cleavage product of UQCRFS1). This cytochrome bc1 complex then forms a dimer. The cofactor is heme b.

The protein localises to the mitochondrion inner membrane. Functionally, component of the ubiquinol-cytochrome c reductase complex (complex III or cytochrome b-c1 complex) that is part of the mitochondrial respiratory chain. The b-c1 complex mediates electron transfer from ubiquinol to cytochrome c. Contributes to the generation of a proton gradient across the mitochondrial membrane that is then used for ATP synthesis. This Cricetomys emini (Emin's giant pouched rat) protein is Cytochrome b (MT-CYB).